The primary structure comprises 87 residues: Large ribosomal subunit protein bL27 (87 aa).

The disordered stretch occupies residues 1–21 (MAHKKGGGSTRNGRDSASKRL).

Belongs to the bacterial ribosomal protein bL27 family.

This chain is Large ribosomal subunit protein bL27, found in Amoebophilus asiaticus (strain 5a2).